The chain runs to 252 residues: 2-succinyl-6-hydroxy-2,4-cyclohexadiene-1-carboxylate synthase (252 aa).

It belongs to the AB hydrolase superfamily. MenH family. As to quaternary structure, monomer.

The enzyme catalyses 5-enolpyruvoyl-6-hydroxy-2-succinyl-cyclohex-3-ene-1-carboxylate = (1R,6R)-6-hydroxy-2-succinyl-cyclohexa-2,4-diene-1-carboxylate + pyruvate. It participates in quinol/quinone metabolism; 1,4-dihydroxy-2-naphthoate biosynthesis; 1,4-dihydroxy-2-naphthoate from chorismate: step 3/7. Its pathway is quinol/quinone metabolism; menaquinone biosynthesis. Functionally, catalyzes a proton abstraction reaction that results in 2,5-elimination of pyruvate from 2-succinyl-5-enolpyruvyl-6-hydroxy-3-cyclohexene-1-carboxylate (SEPHCHC) and the formation of 2-succinyl-6-hydroxy-2,4-cyclohexadiene-1-carboxylate (SHCHC). This is 2-succinyl-6-hydroxy-2,4-cyclohexadiene-1-carboxylate synthase from Escherichia coli O81 (strain ED1a).